A 434-amino-acid polypeptide reads, in one-letter code: Histidinol dehydrogenase (434 aa).

The NAD(+) site is built by Tyr130, Gln188, and Asn211. Ser237, Gln259, and His262 together coordinate substrate. Residues Gln259 and His262 each coordinate Zn(2+). Residues Glu326 and His327 each act as proton acceptor in the active site. Substrate contacts are provided by His327, Asp360, Glu414, and His419. Asp360 lines the Zn(2+) pocket. His419 serves as a coordination point for Zn(2+).

It belongs to the histidinol dehydrogenase family. As to quaternary structure, homodimer. Zn(2+) serves as cofactor.

The catalysed reaction is L-histidinol + 2 NAD(+) + H2O = L-histidine + 2 NADH + 3 H(+). Its pathway is amino-acid biosynthesis; L-histidine biosynthesis; L-histidine from 5-phospho-alpha-D-ribose 1-diphosphate: step 9/9. Functionally, catalyzes the sequential NAD-dependent oxidations of L-histidinol to L-histidinaldehyde and then to L-histidine. This chain is Histidinol dehydrogenase, found in Salmonella choleraesuis (strain SC-B67).